The chain runs to 639 residues: UvrABC system protein C (639 aa).

A GIY-YIG domain is found at 20–97; that stretch reads ERSGVYRMFD…IKKFQPKFNI (78 aa). The UVR domain occupies 207–242; it reads KELQENLSRKMEELSSQMRFEEAAEIRDRIKALSYV.

The protein belongs to the UvrC family. As to quaternary structure, interacts with UvrB in an incision complex.

Its subcellular location is the cytoplasm. The UvrABC repair system catalyzes the recognition and processing of DNA lesions. UvrC both incises the 5' and 3' sides of the lesion. The N-terminal half is responsible for the 3' incision and the C-terminal half is responsible for the 5' incision. In Rickettsia africae (strain ESF-5), this protein is UvrABC system protein C.